The chain runs to 362 residues: S-adenosylmethionine decarboxylase proenzyme 2 (362 aa).

Active-site residues include E9 and E12. E68 lines the substrate pocket. Catalysis depends on S69, which acts as the Schiff-base intermediate with substrate; via pyruvic acid. Residue S69 is modified to Pyruvic acid (Ser); by autocatalysis. C83 (proton donor; for catalytic activity) is an active-site residue. Active-site proton acceptor; for processing activity residues include S232 and H245. E249 lines the substrate pocket.

The protein belongs to the eukaryotic AdoMetDC family. The cofactor is pyruvate. Is synthesized initially as an inactive proenzyme. Formation of the active enzyme involves a self-maturation process in which the active site pyruvoyl group is generated from an internal serine residue via an autocatalytic post-translational modification. Two non-identical subunits are generated from the proenzyme in this reaction, and the pyruvate is formed at the N-terminus of the alpha chain, which is derived from the carboxyl end of the proenzyme. The post-translation cleavage follows an unusual pathway, termed non-hydrolytic serinolysis, in which the side chain hydroxyl group of the serine supplies its oxygen atom to form the C-terminus of the beta chain, while the remainder of the serine residue undergoes an oxidative deamination to produce ammonia and the pyruvoyl group blocking the N-terminus of the alpha chain.

It catalyses the reaction S-adenosyl-L-methionine + H(+) = S-adenosyl 3-(methylsulfanyl)propylamine + CO2. It functions in the pathway amine and polyamine biosynthesis; S-adenosylmethioninamine biosynthesis; S-adenosylmethioninamine from S-adenosyl-L-methionine: step 1/1. Essential for biosynthesis of the polyamines spermidine and spermine. Essential for polyamine homeostasis, and normal plant embryogenesis, growth and development. The chain is S-adenosylmethionine decarboxylase proenzyme 2 from Arabidopsis thaliana (Mouse-ear cress).